We begin with the raw amino-acid sequence, 419 residues long: CinA-like protein (419 aa).

It belongs to the CinA family.

The sequence is that of CinA-like protein from Parasynechococcus marenigrum (strain WH8102).